The chain runs to 231 residues: Flagellar L-ring protein (231 aa).

Positions 1-18 (MNRLLSVFALGGAVLLAG) are cleaved as a signal peptide. Cys19 is lipidated: N-palmitoyl cysteine. Cys19 carries the S-diacylglycerol cysteine lipid modification.

This sequence belongs to the FlgH family. As to quaternary structure, the basal body constitutes a major portion of the flagellar organelle and consists of four rings (L,P,S, and M) mounted on a central rod.

Its subcellular location is the cell outer membrane. The protein localises to the bacterial flagellum basal body. Its function is as follows. Assembles around the rod to form the L-ring and probably protects the motor/basal body from shearing forces during rotation. The sequence is that of Flagellar L-ring protein from Pseudomonas putida (strain GB-1).